We begin with the raw amino-acid sequence, 148 residues long: MQLILLEKVANLGNLGDKVNVKAGYGRNYLLPYGKATAATAANVAAFEERRAELEKLAADKKASAETRAAQLAELEVTITATAGDEGKLFGSIGTHDIADALTASGVEVAKSEVRLPNGTIRNVGEYDVAVHLHSDVEATVRVVVVAA.

It belongs to the bacterial ribosomal protein bL9 family.

In terms of biological role, binds to the 23S rRNA. This Pseudomonas savastanoi pv. phaseolicola (strain 1448A / Race 6) (Pseudomonas syringae pv. phaseolicola (strain 1448A / Race 6)) protein is Large ribosomal subunit protein bL9.